The sequence spans 378 residues: Beta sliding clamp (378 aa).

The protein belongs to the beta sliding clamp family. In terms of assembly, forms a ring-shaped head-to-tail homodimer around DNA which binds and tethers DNA polymerases and other proteins to the DNA. The DNA replisome complex has a single clamp-loading complex (3 tau and 1 each of delta, delta', psi and chi subunits) which binds 3 Pol III cores (1 core on the leading strand and 2 on the lagging strand) each with a beta sliding clamp dimer. Additional proteins in the replisome are other copies of gamma, psi and chi, Ssb, DNA helicase and RNA primase. Interacts with YabA, and via YabA, with DnaA. During sporulation probably interacts with SirA.

The protein resides in the cytoplasm. It localises to the nucleoid. In terms of biological role, confers DNA tethering and processivity to DNA polymerases and other proteins. Acts as a clamp, forming a ring around DNA (a reaction catalyzed by the clamp-loading complex) which diffuses in an ATP-independent manner freely and bidirectionally along dsDNA. Initially characterized for its ability to contact the catalytic subunit of DNA polymerase III (Pol III), a complex, multichain enzyme responsible for most of the replicative synthesis in bacteria; Pol III exhibits 3'-5' exonuclease proofreading activity. The beta chain is required for initiation of replication as well as for processivity of DNA replication. Overexpression in vivo stimulates inititation of DNA replication from oriC. Increased levels of DnaN remove YabA from its association with DnaA on the chromosome, allowing DnaA to bind to its targets. Its interaction with DnaA probably serves as a sink to prevent excessive replication initiation. In Bacillus subtilis (strain 168), this protein is Beta sliding clamp.